The sequence spans 252 residues: Probable phosphatase Shewmr4_2619 (252 aa).

Histidine 8, histidine 10, histidine 16, histidine 41, glutamate 74, histidine 102, histidine 132, aspartate 193, and histidine 195 together coordinate Zn(2+).

It belongs to the PHP family. The cofactor is Zn(2+).

This is Probable phosphatase Shewmr4_2619 from Shewanella sp. (strain MR-4).